We begin with the raw amino-acid sequence, 251 residues long: Probable transcriptional regulatory protein cu0933 (251 aa).

A disordered region spans residues 56–79 (AKKSSVPNDNIERARKRGSGEEAG).

This sequence belongs to the TACO1 family.

The protein resides in the cytoplasm. The sequence is that of Probable transcriptional regulatory protein cu0933 from Corynebacterium urealyticum (strain ATCC 43042 / DSM 7109).